The following is a 198-amino-acid chain: Superoxide dismutase [Fe] (198 aa).

The Fe cation site is built by His-27, His-74, Asp-158, and His-162.

It belongs to the iron/manganese superoxide dismutase family. In terms of assembly, homodimer. Fe cation is required as a cofactor.

Its subcellular location is the cytoplasm. It carries out the reaction 2 superoxide + 2 H(+) = H2O2 + O2. In terms of biological role, destroys superoxide anion radicals which are normally produced within the cells and which are toxic to biological systems. This is Superoxide dismutase [Fe] (SODB) from Plasmodium falciparum (isolate 3D7).